The primary structure comprises 86 residues: Large ribosomal subunit protein eL20 (86 aa).

This sequence belongs to the eukaryotic ribosomal protein eL20 family. As to quaternary structure, part of the 50S ribosomal subunit. Binds 23S rRNA.

This Sulfolobus acidocaldarius (strain ATCC 33909 / DSM 639 / JCM 8929 / NBRC 15157 / NCIMB 11770) protein is Large ribosomal subunit protein eL20.